A 116-amino-acid polypeptide reads, in one-letter code: Putative RNase MJ0125 (116 aa).

Residues R76 and H81 contribute to the active site. Positions 76 to 83 match the RX(4)HXY motif motif; that stretch reads RDKLIHQY. O-di-AMP-tyrosine is present on Y83.

It belongs to the HepT RNase toxin family. As to quaternary structure, homodimer, probably forms a complex with cognate antitoxin MJ0126. In terms of processing, modified by cognate antitoxin MJ0126; probably at least 2 successive AMPylation events occur on Tyr-83.

Probable toxic component of a putative type VII toxin-antitoxin (TA) system, probably an RNase. Probably neutralized by cognate antitoxin MJ0126. Neutralization may be due to AMPylation by MJ0126. The polypeptide is Putative RNase MJ0125 (Methanocaldococcus jannaschii (strain ATCC 43067 / DSM 2661 / JAL-1 / JCM 10045 / NBRC 100440) (Methanococcus jannaschii)).